We begin with the raw amino-acid sequence, 723 residues long: Solute carrier organic anion transporter family member 4A1 (723 aa).

The Cytoplasmic portion of the chain corresponds to 1–102 (MPQHAMGDTH…KCLQVFNTPK (102 aa)). A disordered region spans residues 23-64 (SSATDSGCDTPPSSRASPASLRSAHGTLGSSSQPLFEPQAEK). A compositionally biased stretch (low complexity) spans 33–46 (PPSSRASPASLRSA). Phosphoserine is present on residues Ser39, Ser42, and Ser45. The chain crosses the membrane as a helical span at residues 103–123 (GFLFFLCAASFLQGMTVNGFI). Residues 124 to 142 (NTVITSIERRFDLHSYQSG) lie on the Extracellular side of the membrane. Residues 143-163 (LIASSYDIAACLCLTFVSYFG) form a helical membrane-spanning segment. At 164–169 (GNGHKP) the chain is on the cytoplasmic side. A helical transmembrane segment spans residues 170 to 194 (RWLGWGVLVLGIGSLVFALPHFTAG). Topologically, residues 195 to 224 (RYEVEMDEGLGTGTCLTNQSHVECKDSASG) are extracellular. N-linked (GlcNAc...) asparagine glycosylation is present at Asn212. The chain crosses the membrane as a helical span at residues 225–255 (LSNYRLIFMLGQLLHGVGATPLYTLGVTYLD). The Cytoplasmic portion of the chain corresponds to 256 to 274 (ENVKSSYSPIYIAIFYTAA). The helical transmembrane segment at 275–295 (ILGPAAGYLIGGAMLNVYTEV) threads the bilayer. Residues 296 to 309 (GQRTELTTDSPLWV) lie on the Extracellular side of the membrane. A helical membrane pass occupies residues 310–334 (GAWWIGFLGTGIAAFLIAIPILGYP). Topologically, residues 335–380 (RQLPGSQRYVVMRAAETQQLKDHSRGAVSNPAFGKTVRDLPLSIWL) are cytoplasmic. The chain crosses the membrane as a helical span at residues 381-402 (LLRNPTFILLCLAGATEATLIA). Residues 403-422 (GMSTFGPKFFEAQFSLSASE) lie on the Extracellular side of the membrane. The helical transmembrane segment at 423 to 446 (AATLFGYLVVPAGGGGTLLGGFLV) threads the bilayer. The Cytoplasmic segment spans residues 447–450 (NKFK). Residues 451–473 (LRGSGIIRFCLFCTLTSLLAFFV) traverse the membrane as a helical segment. The Extracellular segment spans residues 474-582 (FLMHCPNVHM…ASTCQSKPFL (109 aa)). Residues 500–557 (LDLKAACNAIYCCQPKHYSPLCGSDGTMYYSPCYAGCPADAETDLGGQKVYRGCSCIL) form the Kazal-like domain. 2 disulfide bridges follow: Cys506–Cys536 and Cys521–Cys555. N-linked (GlcNAc...) asparagine glycosylation occurs at Asn566. Residues 583 to 605 (LVLVFVVIIFTFLSSIPALTATL) traverse the membrane as a helical segment. Topologically, residues 606–614 (RCVSDRQRS) are cytoplasmic. A helical transmembrane segment spans residues 615–640 (FALGIQWIVVRTLGSIPGPIAFGWVI). Over 641 to 673 (DKACLLWQDQCGHQGSCFVYENEAMSRYMLIAG) the chain is Extracellular. The chain crosses the membrane as a helical span at residues 674 to 691 (LTFKVLGFLFFVAAYFLY). At 692–723 (KSPSVSSDGLEASLPSQSSASDSPTEQLQSNV) the chain is on the cytoplasmic side. Residues 700 to 723 (GLEASLPSQSSASDSPTEQLQSNV) are disordered. The span at 701 to 723 (LEASLPSQSSASDSPTEQLQSNV) shows a compositional bias: low complexity.

It belongs to the organo anion transporter (TC 2.A.60) family.

The protein localises to the cell membrane. The catalysed reaction is 3,3',5-triiodo-L-thyronine(out) + L-glutamate(in) = 3,3',5-triiodo-L-thyronine(in) + L-glutamate(out). The enzyme catalyses L-thyroxine(out) + L-glutamate(in) = L-thyroxine(in) + L-glutamate(out). It catalyses the reaction estrone 3-sulfate(out) + L-glutamate(in) = estrone 3-sulfate(in) + L-glutamate(out). It carries out the reaction taurocholate(out) + L-glutamate(in) = taurocholate(in) + L-glutamate(out). The catalysed reaction is 3,3',5-triiodo-L-thyronine(out) = 3,3',5-triiodo-L-thyronine(in). The enzyme catalyses L-thyroxine(out) = L-thyroxine(in). It catalyses the reaction 3,3',5'-triiodo-L-thyronine(out) = 3,3',5'-triiodo-L-thyronine(in). It carries out the reaction estrone 3-sulfate(out) = estrone 3-sulfate(in). The catalysed reaction is 17beta-estradiol 17-O-(beta-D-glucuronate)(out) = 17beta-estradiol 17-O-(beta-D-glucuronate)(in). The enzyme catalyses taurocholate(out) = taurocholate(in). It catalyses the reaction prostaglandin E2(out) = prostaglandin E2(in). Organic anion antiporter with apparent broad substrate specificity. Recognizes various substrates including thyroid hormones 3,3',5-triiodo-L-thyronine (T3), L-thyroxine (T4) and 3,3',5'-triiodo-L-thyronine (rT3), conjugated steroids such as estrone 3-sulfate and estradiol 17-beta glucuronide, bile acids such as taurocholate and prostanoids such as prostaglandin E2, likely operating in a tissue-specific manner. May be involved in uptake of metabolites from the circulation into organs such as kidney, liver or placenta. Possibly drives the selective transport of thyroid hormones and estrogens coupled to an outward glutamate gradient across the microvillous membrane of the placenta. The transport mechanism, its electrogenicity and potential tissue-specific counterions remain to be elucidated. The protein is Solute carrier organic anion transporter family member 4A1 (Slco4a1) of Mus musculus (Mouse).